Here is a 296-residue protein sequence, read N- to C-terminus: HTH-type transcriptional regulator IlvR (296 aa).

An HTH lysR-type domain is found at 1–58; it reads MDIRQFRHFAAVAETLHFGRAAERLGITQPPLSQSIQALEKALGAPLFARTKRHVELT. Residues 18-37 constitute a DNA-binding region (H-T-H motif); the sequence is FGRAAERLGITQPPLSQSIQ.

It belongs to the LysR transcriptional regulatory family.

Functionally, positively regulates the expression of the ilvD gene while negatively autoregulating its own expression. This Caulobacter vibrioides (strain ATCC 19089 / CIP 103742 / CB 15) (Caulobacter crescentus) protein is HTH-type transcriptional regulator IlvR (ilvR).